The chain runs to 153 residues: Histone H2B.3 (153 aa).

2 stretches are compositionally biased toward basic and acidic residues: residues 1–28 (MAPK…EKAL) and 36–53 (EKRL…EGRK). The disordered stretch occupies residues 1–61 (MAPKAEKKPA…RKAGRKKAKK (61 aa)). N6-acetyllysine is present on residues lysine 7 and lysine 37. A Glycyl lysine isopeptide (Lys-Gly) (interchain with G-Cter in ubiquitin) cross-link involves residue lysine 149.

It belongs to the histone H2B family. The nucleosome is a histone octamer containing two molecules each of H2A, H2B, H3 and H4 assembled in one H3-H4 heterotetramer and two H2A-H2B heterodimers. The octamer wraps approximately 147 bp of DNA. In terms of processing, can be acetylated to form H2BK6ac and H2BK33ac. Post-translationally, monoubiquitinated by BRE1 to form H2BK143ub1 and deubiquitinated by UBP26. Required for heterochromatic histone H3 di- and trimethylation at H3K4me. May give a specific tag for epigenetic transcriptional activation.

The protein localises to the nucleus. Its subcellular location is the chromosome. In terms of biological role, core component of nucleosome. Nucleosomes wrap and compact DNA into chromatin, limiting DNA accessibility to the cellular machineries which require DNA as a template. Histones thereby play a central role in transcription regulation, DNA repair, DNA replication and chromosomal stability. DNA accessibility is regulated via a complex set of post-translational modifications of histones, also called histone code, and nucleosome remodeling. The protein is Histone H2B.3 (H2B.3) of Oryza sativa subsp. indica (Rice).